Consider the following 141-residue polypeptide: ATP synthase epsilon chain (141 aa).

Belongs to the ATPase epsilon chain family. As to quaternary structure, F-type ATPases have 2 components, CF(1) - the catalytic core - and CF(0) - the membrane proton channel. CF(1) has five subunits: alpha(3), beta(3), gamma(1), delta(1), epsilon(1). CF(0) has three main subunits: a, b and c.

It localises to the cell inner membrane. Produces ATP from ADP in the presence of a proton gradient across the membrane. The sequence is that of ATP synthase epsilon chain from Pseudomonas savastanoi pv. phaseolicola (strain 1448A / Race 6) (Pseudomonas syringae pv. phaseolicola (strain 1448A / Race 6)).